A 204-amino-acid chain; its full sequence is Pro-hevein (204 aa).

The signal sequence occupies residues 1-17 (MNIFIVVLLCLTGVAIA). One can recognise a Chitin-binding type-1 domain in the interval 18–60 (EQCGRQAGGKLCPNNLCCSQWGWCGSTDEYCSPDHNCQSNCKD). Disulfide bonds link cysteine 20/cysteine 35, cysteine 29/cysteine 41, cysteine 34/cysteine 48, and cysteine 54/cysteine 58. Residues 61-66 (SGEGVG) constitute a propeptide that is removed on maturation. The Barwin domain maps to 68-189 (GSASNVLATY…VNYQFVDCGD (122 aa)). Cystine bridges form between cysteine 96-cysteine 128, cysteine 117-cysteine 151, and cysteine 131-cysteine 187.

In terms of processing, proteolytically processed to yield the two chains of the mature protein. As to expression, laticifer.

Functionally, N-acetyl-D-glucosamine / N-acetyl-D-neuraminic acid binding lectin. Can inhibit fungal growth. This chain is Pro-hevein (HEV1), found in Hevea brasiliensis (Para rubber tree).